A 239-amino-acid chain; its full sequence is Tetraspanin-9 (239 aa).

Topologically, residues 1-13 are cytoplasmic; that stretch reads MARGCLCCLKYMM. Residues 14–34 traverse the membrane as a helical segment; that stretch reads FLFNLIFWLCGCGLLGVGIWL. Topologically, residues 35-55 are extracellular; that stretch reads SVSQGNFATFSPSFPSLSAAN. A helical transmembrane segment spans residues 56-76; that stretch reads LVIAIGTIVMVTGFLGCLGAI. Residues 77 to 85 are Cytoplasmic-facing; sequence KENRCLLLS. The chain crosses the membrane as a helical span at residues 86–106; that stretch reads FFIVLLIILLAELILIILFFV. Topologically, residues 107 to 203 are extracellular; it reads YMDKVNENAR…VKMWFDDNKH (97 aa). N-linked (GlcNAc...) asparagine glycosylation is present at N180. A helical transmembrane segment spans residues 204–224; the sequence is VLGTVGMCILIMQILGMAFSM. The Cytoplasmic portion of the chain corresponds to 225–239; the sequence is TLFQHIHRTGKKYDA.

Belongs to the tetraspanin (TM4SF) family. In terms of assembly, found in a complex with GP6. Glycosylated.

It is found in the membrane. The polypeptide is Tetraspanin-9 (TSPAN9) (Sus scrofa (Pig)).